The chain runs to 725 residues: Ribosomal RNA large subunit methyltransferase K/L (725 aa).

Residues 46–157 (VAYRLCLWSR…RGQATLSLDL (112 aa)) enclose the THUMP domain.

This sequence belongs to the methyltransferase superfamily. RlmKL family.

It localises to the cytoplasm. The enzyme catalyses guanosine(2445) in 23S rRNA + S-adenosyl-L-methionine = N(2)-methylguanosine(2445) in 23S rRNA + S-adenosyl-L-homocysteine + H(+). It catalyses the reaction guanosine(2069) in 23S rRNA + S-adenosyl-L-methionine = N(2)-methylguanosine(2069) in 23S rRNA + S-adenosyl-L-homocysteine + H(+). Its function is as follows. Specifically methylates the guanine in position 2445 (m2G2445) and the guanine in position 2069 (m7G2069) of 23S rRNA. The chain is Ribosomal RNA large subunit methyltransferase K/L from Pseudomonas aeruginosa (strain ATCC 15692 / DSM 22644 / CIP 104116 / JCM 14847 / LMG 12228 / 1C / PRS 101 / PAO1).